We begin with the raw amino-acid sequence, 152 residues long: Allergen Asp f 15 (152 aa).

A signal peptide spans 1-19 (MKFTTPISLISLFVSSALA). 2 cysteine pairs are disulfide-bonded: Cys-53–Cys-90 and Cys-93–Cys-148.

The protein belongs to the cerato-platanin family.

The protein resides in the secreted. The polypeptide is Allergen Asp f 15 (Aspergillus fumigatus (strain ATCC MYA-4609 / CBS 101355 / FGSC A1100 / Af293) (Neosartorya fumigata)).